The primary structure comprises 377 residues: DNA replication and repair protein RecF (377 aa).

30–37 (GQNAQGKS) contacts ATP.

Belongs to the RecF family.

The protein localises to the cytoplasm. Its function is as follows. The RecF protein is involved in DNA metabolism; it is required for DNA replication and normal SOS inducibility. RecF binds preferentially to single-stranded, linear DNA. It also seems to bind ATP. The chain is DNA replication and repair protein RecF from Cyanothece sp. (strain PCC 7425 / ATCC 29141).